The sequence spans 126 residues: Holo-[acyl-carrier-protein] synthase (126 aa).

The Mg(2+) site is built by Asp9 and Glu58.

The protein belongs to the P-Pant transferase superfamily. AcpS family. Requires Mg(2+) as cofactor.

It is found in the cytoplasm. It carries out the reaction apo-[ACP] + CoA = holo-[ACP] + adenosine 3',5'-bisphosphate + H(+). In terms of biological role, transfers the 4'-phosphopantetheine moiety from coenzyme A to a Ser of acyl-carrier-protein. This is Holo-[acyl-carrier-protein] synthase from Shewanella frigidimarina (strain NCIMB 400).